A 143-amino-acid polypeptide reads, in one-letter code: Large ribosomal subunit protein uL13 (143 aa).

This sequence belongs to the universal ribosomal protein uL13 family. As to quaternary structure, part of the 50S ribosomal subunit.

This protein is one of the early assembly proteins of the 50S ribosomal subunit, although it is not seen to bind rRNA by itself. It is important during the early stages of 50S assembly. The chain is Large ribosomal subunit protein uL13 from Carboxydothermus hydrogenoformans (strain ATCC BAA-161 / DSM 6008 / Z-2901).